Reading from the N-terminus, the 384-residue chain is 8-amino-7-oxononanoate synthase (384 aa).

Arginine 21 lines the substrate pocket. Pyridoxal 5'-phosphate is bound at residue 108 to 109 (GF). Substrate is bound at residue histidine 133. Residues serine 179, histidine 207, and threonine 233 each contribute to the pyridoxal 5'-phosphate site. At lysine 236 the chain carries N6-(pyridoxal phosphate)lysine. Threonine 352 contributes to the substrate binding site.

Belongs to the class-II pyridoxal-phosphate-dependent aminotransferase family. BioF subfamily. Homodimer. The cofactor is pyridoxal 5'-phosphate.

It catalyses the reaction 6-carboxyhexanoyl-[ACP] + L-alanine + H(+) = (8S)-8-amino-7-oxononanoate + holo-[ACP] + CO2. Its pathway is cofactor biosynthesis; biotin biosynthesis. Functionally, catalyzes the decarboxylative condensation of pimeloyl-[acyl-carrier protein] and L-alanine to produce 8-amino-7-oxononanoate (AON), [acyl-carrier protein], and carbon dioxide. In Escherichia coli O17:K52:H18 (strain UMN026 / ExPEC), this protein is 8-amino-7-oxononanoate synthase.